The chain runs to 468 residues: Probable Xaa-Pro aminopeptidase PEPP (468 aa).

The Mn(2+) site is built by Asp264, Asp275, Glu398, and Glu438.

Belongs to the peptidase M24B family. Mn(2+) is required as a cofactor.

The catalysed reaction is Release of any N-terminal amino acid, including proline, that is linked to proline, even from a dipeptide or tripeptide.. Catalyzes the removal of a penultimate prolyl residue from the N-termini of peptides. This chain is Probable Xaa-Pro aminopeptidase PEPP (PEPP), found in Paracoccidioides lutzii (strain ATCC MYA-826 / Pb01) (Paracoccidioides brasiliensis).